A 324-amino-acid polypeptide reads, in one-letter code: tRNA dimethylallyltransferase (324 aa).

Gly17–Thr24 serves as a coordination point for ATP. Thr19–Thr24 contributes to the substrate binding site. Interaction with substrate tRNA regions lie at residues Asp42 to Leu45, Gln166 to Arg170, and Arg251 to Arg256.

Belongs to the IPP transferase family. As to quaternary structure, monomer. It depends on Mg(2+) as a cofactor.

The enzyme catalyses adenosine(37) in tRNA + dimethylallyl diphosphate = N(6)-dimethylallyladenosine(37) in tRNA + diphosphate. Its function is as follows. Catalyzes the transfer of a dimethylallyl group onto the adenine at position 37 in tRNAs that read codons beginning with uridine, leading to the formation of N6-(dimethylallyl)adenosine (i(6)A). The chain is tRNA dimethylallyltransferase from Burkholderia mallei (strain NCTC 10247).